A 347-amino-acid polypeptide reads, in one-letter code: Phosphate acyltransferase (347 aa).

Belongs to the PlsX family. In terms of assembly, homodimer. Probably interacts with PlsY.

It is found in the cytoplasm. It carries out the reaction a fatty acyl-[ACP] + phosphate = an acyl phosphate + holo-[ACP]. The protein operates within lipid metabolism; phospholipid metabolism. Functionally, catalyzes the reversible formation of acyl-phosphate (acyl-PO(4)) from acyl-[acyl-carrier-protein] (acyl-ACP). This enzyme utilizes acyl-ACP as fatty acyl donor, but not acyl-CoA. The chain is Phosphate acyltransferase from Sinorhizobium fredii (strain NBRC 101917 / NGR234).